Reading from the N-terminus, the 185-residue chain is Ribosome-recycling factor (185 aa).

Belongs to the RRF family.

It localises to the cytoplasm. Its function is as follows. Responsible for the release of ribosomes from messenger RNA at the termination of protein biosynthesis. May increase the efficiency of translation by recycling ribosomes from one round of translation to another. This Edwardsiella ictaluri (strain 93-146) protein is Ribosome-recycling factor.